We begin with the raw amino-acid sequence, 93 residues long: Large ribosomal subunit protein uL23 (93 aa).

Belongs to the universal ribosomal protein uL23 family. Part of the 50S ribosomal subunit. Contacts protein L29, and trigger factor when it is bound to the ribosome.

In terms of biological role, one of the early assembly proteins it binds 23S rRNA. One of the proteins that surrounds the polypeptide exit tunnel on the outside of the ribosome. Forms the main docking site for trigger factor binding to the ribosome. The sequence is that of Large ribosomal subunit protein uL23 from Helicobacter acinonychis (strain Sheeba).